A 224-amino-acid chain; its full sequence is ATP-dependent dethiobiotin synthetase BioD (224 aa).

Position 18 (Thr18) interacts with Mg(2+). Residue Lys39 is part of the active site. Residue Ser43 coordinates substrate. Mg(2+) is bound by residues Asp56 and Glu117. ATP contacts are provided by residues Asp56, 117 to 120 (EGVG), and 177 to 178 (NE).

It belongs to the dethiobiotin synthetase family. In terms of assembly, homodimer. It depends on Mg(2+) as a cofactor.

The protein localises to the cytoplasm. It carries out the reaction (7R,8S)-7,8-diammoniononanoate + CO2 + ATP = (4R,5S)-dethiobiotin + ADP + phosphate + 3 H(+). It participates in cofactor biosynthesis; biotin biosynthesis; biotin from 7,8-diaminononanoate: step 1/2. In terms of biological role, catalyzes a mechanistically unusual reaction, the ATP-dependent insertion of CO2 between the N7 and N8 nitrogen atoms of 7,8-diaminopelargonic acid (DAPA, also called 7,8-diammoniononanoate) to form a ureido ring. In Xanthomonas euvesicatoria pv. vesicatoria (strain 85-10) (Xanthomonas campestris pv. vesicatoria), this protein is ATP-dependent dethiobiotin synthetase BioD.